A 114-amino-acid chain; its full sequence is T cell receptor beta variable 19 (114 aa).

Positions 1 to 21 (MSNQVLCCVVLCLLGANTVDG) are cleaved as a signal peptide. The 93-residue stretch at 22-114 (GITQSPKYLF…TAFYLCASSI (93 aa)) folds into the Ig-like domain. A glycan (N-linked (GlcNAc...) asparagine) is linked at N37. The cysteines at positions 42 and 110 are disulfide-linked.

As to quaternary structure, alpha-beta TR is a heterodimer composed of an alpha and beta chain; disulfide-linked. The alpha-beta TR is associated with the transmembrane signaling CD3 coreceptor proteins to form the TR-CD3 (TcR or TCR). The assembly of alpha-beta TR heterodimers with CD3 occurs in the endoplasmic reticulum where a single alpha-beta TR heterodimer associates with one CD3D-CD3E heterodimer, one CD3G-CD3E heterodimer and one CD247 homodimer forming a stable octameric structure. CD3D-CD3E and CD3G-CD3E heterodimers preferentially associate with TR alpha and TR beta chains, respectively. The association of the CD247 homodimer is the last step of TcR assembly in the endoplasmic reticulum and is required for transport to the cell surface. (Microbial infection) Interacts with Staphylococcus aureus enterotoxin type B/SEB.

It is found in the cell membrane. Functionally, v region of the variable domain of T cell receptor (TR) beta chain that participates in the antigen recognition. Alpha-beta T cell receptors are antigen specific receptors which are essential to the immune response and are present on the cell surface of T lymphocytes. Recognize peptide-major histocompatibility (MH) (pMH) complexes that are displayed by antigen presenting cells (APC), a prerequisite for efficient T cell adaptive immunity against pathogens. Binding of alpha-beta TR to pMH complex initiates TR-CD3 clustering on the cell surface and intracellular activation of LCK that phosphorylates the ITAM motifs of CD3G, CD3D, CD3E and CD247 enabling the recruitment of ZAP70. In turn ZAP70 phosphorylates LAT, which recruits numerous signaling molecules to form the LAT signalosome. The LAT signalosome propagates signal branching to three major signaling pathways, the calcium, the mitogen-activated protein kinase (MAPK) kinase and the nuclear factor NF-kappa-B (NF-kB) pathways, leading to the mobilization of transcription factors that are critical for gene expression and essential for T cell growth and differentiation. The T cell repertoire is generated in the thymus, by V-(D)-J rearrangement. This repertoire is then shaped by intrathymic selection events to generate a peripheral T cell pool of self-MH restricted, non-autoaggressive T cells. Post-thymic interaction of alpha-beta TR with the pMH complexes shapes TR structural and functional avidity. The protein is T cell receptor beta variable 19 of Homo sapiens (Human).